We begin with the raw amino-acid sequence, 433 residues long: Histone deacetylase RPD3 (433 aa).

The interval 19–331 is histone deacetylase; sequence RRVAYFYDAD…WCFETGLLNN (313 aa). H151 is an active-site residue. An ESA1-RPD3 motif motif is present at residues 320-340; the sequence is RTWCFETGLLNNVVLDKDLPY. The segment at 388-433 is disordered; that stretch reads SVQLNHTPRDAEDLGDVEEDSAEAKDTKGGSQYARDLHVEHDNEFY. T394 is modified (phosphothreonine). S408 carries the post-translational modification Phosphoserine. Basic and acidic residues predominate over residues 422–433; that stretch reads RDLHVEHDNEFY.

The protein belongs to the histone deacetylase family. HD type 1 subfamily. In terms of assembly, component of the RPD3C(L) complex composed of at least ASH1, CTI6, DEP1, PHO23, RPD3, RXT2, RXT3, SAP30, SDS3, SIN3, UME1 and UME6. Component of the RPD3C(S) complex composed of at least EAF3, RCO1, RPD3, SIN3, and UME1. Interacts with cyclophilins CPR1, CPR6 and CPR7, with the kinase HOG1, and with ESS1, CYC8 and HAC1.

The protein resides in the cytoplasm. It localises to the nucleus. It catalyses the reaction N(6)-acetyl-L-lysyl-[histone] + H2O = L-lysyl-[histone] + acetate. In terms of biological role, catalytic component of the RPD3 histone deacetylase (HDAC) complexes RPD3C(L) and RPD3C(S) responsible for the deacetylation of lysine residues on the N-terminal part of the core histones (H2A, H2B, H3 and H4). Histone deacetylation plays an important role in transcriptional regulation, cell cycle progression, DNA damage response, osmotic stress response and developmental events. Is involved in rDNA and telomere silencing and in double strand breaks repair. Required for both full transcription repression and activation of many genes including cell type-specific genes (STE6, TY2 and HO), cell differentiation-specific genes (SPO13), genes that respond to external signals (PHO5) and TRK2. The RPD3 complexes regulate also chromosomal replication timing. The polypeptide is Histone deacetylase RPD3 (RPD3) (Saccharomyces cerevisiae (strain ATCC 204508 / S288c) (Baker's yeast)).